Here is a 320-residue protein sequence, read N- to C-terminus: Methionyl-tRNA formyltransferase (320 aa).

114-117 lines the (6S)-5,6,7,8-tetrahydrofolate pocket; that stretch reads SLLP.

It belongs to the Fmt family.

The enzyme catalyses L-methionyl-tRNA(fMet) + (6R)-10-formyltetrahydrofolate = N-formyl-L-methionyl-tRNA(fMet) + (6S)-5,6,7,8-tetrahydrofolate + H(+). Attaches a formyl group to the free amino group of methionyl-tRNA(fMet). The formyl group appears to play a dual role in the initiator identity of N-formylmethionyl-tRNA by promoting its recognition by IF2 and preventing the misappropriation of this tRNA by the elongation apparatus. The chain is Methionyl-tRNA formyltransferase from Acinetobacter baumannii (strain AB0057).